A 239-amino-acid chain; its full sequence is TPR repeat-containing protein TP_0282 (239 aa).

Residues 21–43 form a helical membrane-spanning segment; it reads LLVGVLVAILGGLGLSAGCLLVM. 2 TPR repeats span residues 112-145 and 149-182; these read AYAQ…ARRS and GVYY…QDFP.

The protein resides in the cell membrane. This Treponema pallidum (strain Nichols) protein is TPR repeat-containing protein TP_0282.